We begin with the raw amino-acid sequence, 211 residues long: Protein-L-isoaspartate O-methyltransferase (211 aa).

Ser60 is a catalytic residue.

It belongs to the methyltransferase superfamily. L-isoaspartyl/D-aspartyl protein methyltransferase family.

Its subcellular location is the cytoplasm. It carries out the reaction [protein]-L-isoaspartate + S-adenosyl-L-methionine = [protein]-L-isoaspartate alpha-methyl ester + S-adenosyl-L-homocysteine. In terms of biological role, catalyzes the methyl esterification of L-isoaspartyl residues in peptides and proteins that result from spontaneous decomposition of normal L-aspartyl and L-asparaginyl residues. It plays a role in the repair and/or degradation of damaged proteins. The polypeptide is Protein-L-isoaspartate O-methyltransferase (Ectopseudomonas mendocina (strain ymp) (Pseudomonas mendocina)).